Here is a 131-residue protein sequence, read N- to C-terminus: MFAVLKTGGKQYKVQAGDVLRVEKLACEAGDKIQFNDILMVGGDSVTVGAPFVAGAAVQAEVIAQIKGEKTIHYVKRRRKHSSQRTKGHRQQLTLLRVTDVLASGADASGVAAATGTADARRAAHNASAKE.

The disordered stretch occupies residues Val111–Glu131.

It belongs to the bacterial ribosomal protein bL21 family. Part of the 50S ribosomal subunit. Contacts protein L20.

In terms of biological role, this protein binds to 23S rRNA in the presence of protein L20. In Cereibacter sphaeroides (strain ATCC 17029 / ATH 2.4.9) (Rhodobacter sphaeroides), this protein is Large ribosomal subunit protein bL21.